A 355-amino-acid chain; its full sequence is Protein RecA (355 aa).

Gly-72–Thr-79 serves as a coordination point for ATP.

The protein belongs to the RecA family.

It localises to the cytoplasm. In terms of biological role, can catalyze the hydrolysis of ATP in the presence of single-stranded DNA, the ATP-dependent uptake of single-stranded DNA by duplex DNA, and the ATP-dependent hybridization of homologous single-stranded DNAs. It interacts with LexA causing its activation and leading to its autocatalytic cleavage. The protein is Protein RecA of Wolbachia sp. subsp. Drosophila simulans (strain wRi).